The sequence spans 225 residues: UPF0758 protein NMB1038 (225 aa).

An MPN domain is found at 102–224; sequence VLSDPDTVAD…VCSFRQLGLM (123 aa). Zn(2+)-binding residues include H173, H175, and D186. Positions 173 to 186 match the JAMM motif motif; that stretch reads HNHPGGSPEPSQED.

This sequence belongs to the UPF0758 family.

The chain is UPF0758 protein NMB1038 from Neisseria meningitidis serogroup B (strain ATCC BAA-335 / MC58).